The sequence spans 209 residues: Uracil phosphoribosyltransferase (209 aa).

5-phospho-alpha-D-ribose 1-diphosphate-binding positions include Arg79, Arg104, and 131–139 (DPMLATGGS). Uracil contacts are provided by residues Ile194 and 199–201 (GDA). Asp200 contacts 5-phospho-alpha-D-ribose 1-diphosphate.

The protein belongs to the UPRTase family. Mg(2+) is required as a cofactor.

The enzyme catalyses UMP + diphosphate = 5-phospho-alpha-D-ribose 1-diphosphate + uracil. It functions in the pathway pyrimidine metabolism; UMP biosynthesis via salvage pathway; UMP from uracil: step 1/1. With respect to regulation, allosterically activated by GTP. Catalyzes the conversion of uracil and 5-phospho-alpha-D-ribose 1-diphosphate (PRPP) to UMP and diphosphate. This is Uracil phosphoribosyltransferase from Clostridium novyi (strain NT).